The following is a 396-amino-acid chain: Stearoyl-[acyl-carrier-protein] 9-desaturase, chloroplastic (396 aa).

The transit peptide at 1–33 (MALRITPVTLQSERYRSFSFPKKANLRSPKFAM) directs the protein to the chloroplast. Ala34 carries the post-translational modification Blocked amino end (Ala); partial. Positions 138, 176, 179, 229, 262, and 265 each coordinate Fe cation.

The protein belongs to the fatty acid desaturase type 2 family. In terms of assembly, homodimer. Requires Fe(2+) as cofactor. Post-translationally, most of the N-terminus is blocked.

It localises to the plastid. Its subcellular location is the chloroplast. The catalysed reaction is octadecanoyl-[ACP] + 2 reduced [2Fe-2S]-[ferredoxin] + O2 + 2 H(+) = (9Z)-octadecenoyl-[ACP] + 2 oxidized [2Fe-2S]-[ferredoxin] + 2 H2O. Its pathway is lipid metabolism; fatty acid metabolism. Its function is as follows. Converts stearoyl-ACP to oleoyl-ACP by introduction of a cis double bond between carbons 9 and 10 of the acyl chain. The sequence is that of Stearoyl-[acyl-carrier-protein] 9-desaturase, chloroplastic from Carthamus tinctorius (Safflower).